The following is a 343-amino-acid chain: N-malonyltransferase FDB2 (343 aa).

Catalysis depends on Cys107, which acts as the Acyl-thioester intermediate. His155 (proton acceptor) is an active-site residue. The active site involves Asp170.

This sequence belongs to the arylamine N-acetyltransferase family.

It participates in xenobiotic degradation. Functionally, N-malonyltransferase; part of the Fusarium detoxification of benzoxazolinone cluster involved in the degradation of benzoxazolinones produced by the host plant. Maize, wheat, and rye produce the 2 benzoxazinone phytoanticipins 2,4-dihy-droxy-7-methoxy-1,4-benzoxazin-3-one (DIMBOA) and 2,4-dihydroxy-1,4-benzoxazin-3-one (DIBOA) that, due to their inherent instability once released, spontaneously degrade to the more stable corresponding benzoxazolinones, 6-methoxy-2-benzoxazolinone (MBOA) and 2-benzoxazolinone (BOA), respectively. The first step in the detoxification of benzoxazolinones involves the hydrolysis of the cyclic ester bond of benzoxazolinones by the gamma-lactamase FDB1 to aminophenols. FDB1 is able to convert BOA into 2-aminophenol (2-AP), as well as MBOA into 5-methoxy-2-aminophenol (2-AMP). The N-malonyltransferase FDB2 then metabolizes aminophenols via N-malonylation to non-toxic malonamic acids. FDB2 converts 2-AP into N-(2-hydroxyphenyl) malonamic acid (HPMA) and 2-AMP into N-(2-hydroxy-4-methoxyphenyl) malonamic acid (HMPMA). The cluster also contains 2 transcription factors (FDB3 and FPSE_08121), an aldo-keto reductase (FPSE_08125) that possibly associates with a ketone component of BOA and MBOA degradation, an esterase (FPSE_08126), an acyl-CoA transferase (FPSE_08120), a solute carrier protein (FPSE_08119) and a transmembrane transporter (FPSE_08127) proposed to shuttle metabolites of benzoxazolinone degradation. The protein is N-malonyltransferase FDB2 of Fusarium pseudograminearum (strain CS3096) (Wheat and barley crown-rot fungus).